The sequence spans 89 residues: UPF0145 protein MJ1170 (89 aa).

This sequence belongs to the UPF0145 family. Highly divergent.

This Methanocaldococcus jannaschii (strain ATCC 43067 / DSM 2661 / JAL-1 / JCM 10045 / NBRC 100440) (Methanococcus jannaschii) protein is UPF0145 protein MJ1170.